The following is an 862-amino-acid chain: Ecdysone-induced protein 78C (862 aa).

Disordered stretches follow at residues 28–83 (SSEQ…EEAL), 97–138 (LHFF…KQHH), 173–210 (ASLS…LNCT), and 230–353 (ASNH…NNNN). The span at 37-46 (KQEDLIKDFT) shows a compositional bias: basic and acidic residues. Positions 47–82 (RDEEEQPSEEEAEEEDNEEDEEEEGEEEEEDEDEEA) are enriched in acidic residues. The segment covering 105–119 (DSSTQGAYSEANSLE) has biased composition (polar residues). Composition is skewed to low complexity over residues 173 to 206 (ASLS…QQHQ), 230 to 291 (ASNH…NNSV), 308 to 335 (QQQQ…QQQQ), and 342 to 353 (SSSSNGSSNNNN). A DNA-binding region (nuclear receptor) is located at residues 360-435 (FVPCKVCGDK…AGMSRDSVRY (76 aa)). 2 consecutive NR C4-type zinc fingers follow at residues 363-383 (CKVC…CEGC) and 399-418 (CLRD…CQYC). A disordered region spans residues 444–557 (ELNGAAASSA…NNNSSSGNAS (114 aa)). The span at 447-460 (GAAASSAAAGAPAS) shows a compositional bias: low complexity. Polar residues predominate over residues 463-472 (VDDSTSSTLH). Over residues 475-508 (HLQQQQQQHLLQQQQQQQHQPQLQQHHQLQQQPH) the composition is skewed to low complexity. Positions 516–533 (TPSTPQTPQMCSIASSPS) are enriched in polar residues. Over residues 539 to 555 (NSANNNNNNNNNSSSGN) the composition is skewed to low complexity. The NR LBD domain maps to 626 to 855 (YTEELTRELM…PPLFAEIFDI (230 aa)).

The protein belongs to the nuclear hormone receptor family. NR1 subfamily.

Its subcellular location is the nucleus. Functionally, induces the early late puff 78C which triggers puparium formation and development. The protein is Ecdysone-induced protein 78C (Eip78C) of Drosophila melanogaster (Fruit fly).